A 230-amino-acid polypeptide reads, in one-letter code: 2,3-bisphosphoglycerate-dependent phosphoglycerate mutase (230 aa).

Substrate is bound by residues 8-15, 21-22, Arg-60, 87-90, Lys-98, 114-115, and 183-184; these read RHGESEWN, TG, ERHY, RR, and GN. His-9 functions as the Tele-phosphohistidine intermediate in the catalytic mechanism. Glu-87 acts as the Proton donor/acceptor in catalysis.

The protein belongs to the phosphoglycerate mutase family. BPG-dependent PGAM subfamily.

It catalyses the reaction (2R)-2-phosphoglycerate = (2R)-3-phosphoglycerate. The protein operates within carbohydrate degradation; glycolysis; pyruvate from D-glyceraldehyde 3-phosphate: step 3/5. Functionally, catalyzes the interconversion of 2-phosphoglycerate and 3-phosphoglycerate. This is 2,3-bisphosphoglycerate-dependent phosphoglycerate mutase from Streptococcus pneumoniae (strain P1031).